Here is a 104-residue protein sequence, read N- to C-terminus: Large ribosomal subunit protein bL21 (104 aa).

This sequence belongs to the bacterial ribosomal protein bL21 family. As to quaternary structure, part of the 50S ribosomal subunit. Contacts protein L20.

In terms of biological role, this protein binds to 23S rRNA in the presence of protein L20. The sequence is that of Large ribosomal subunit protein bL21 from Gluconobacter oxydans (strain 621H) (Gluconobacter suboxydans).